Reading from the N-terminus, the 201-residue chain is MAVEALHCGLNPRGIDHPAHAEGIKLQIEGEGVESQSIKNKNFQKVPDQKGTPKRLQAEAETAKSATVKLSKPVALWTQQDVCKWLKKHCPNQYQIYSESFKQHDITGRALLRLTDKKLERMGIAQENLRQHILQQVLQLKVREEVRNLQLLTQGTLLLPDGWMDGEIRRKTTLLLGQTGVRENLLLFLHRISIIENSIQI.

One can recognise an SAM domain in the interval 77 to 143 (WTQQDVCKWL…LQQVLQLKVR (67 aa)).

In terms of tissue distribution, expressed in the brain.

The protein is Sterile alpha motif domain-containing protein 12 (SAMD12) of Homo sapiens (Human).